A 500-amino-acid chain; its full sequence is NAD(P)H-quinone oxidoreductase chain 4, chloroplastic (500 aa).

The next 15 helical transmembrane spans lie at 4–24 (FPWL…MLFL), 35–55 (YTIC…CYNF), 87–107 (IGTI…AFPV), 113–130 (LFHF…GSFS), 134–154 (LLLF…LLAM), 167–187 (FILY…GISL), 211–231 (ILFY…IPLH), 242–262 (HYST…YGLV), 272–292 (AHSM…IYAA), 305–325 (IAYS…SITD), 330–350 (GAIL…FLAG), 364–384 (MGGM…LSMA), 386–406 (LALP…GIIT), 411–431 (FLIF…LTPI), and 462–482 (LFLS…PDFV).

Belongs to the complex I subunit 4 family.

It localises to the plastid. The protein resides in the chloroplast thylakoid membrane. The enzyme catalyses a plastoquinone + NADH + (n+1) H(+)(in) = a plastoquinol + NAD(+) + n H(+)(out). The catalysed reaction is a plastoquinone + NADPH + (n+1) H(+)(in) = a plastoquinol + NADP(+) + n H(+)(out). This Capsella bursa-pastoris (Shepherd's purse) protein is NAD(P)H-quinone oxidoreductase chain 4, chloroplastic.